The following is a 172-amino-acid chain: Gastrula zinc finger protein XlCGF51.1A (172 aa).

C2H2-type zinc fingers lie at residues 6-28 (FSCS…NKIH), 34-56 (LICS…QRSH), 62-84 (FSCT…QRTH), 90-112 (FSCT…MLKH), 122-144 (LDCS…RKSH), and 150-172 (LQCS…QRVH).

This sequence belongs to the krueppel C2H2-type zinc-finger protein family.

Its subcellular location is the nucleus. May be involved in transcriptional regulation. In Xenopus laevis (African clawed frog), this protein is Gastrula zinc finger protein XlCGF51.1A.